We begin with the raw amino-acid sequence, 369 residues long: MRKRISAIINKLNISIIIMTVVLMIGCGQQPEAGKTGVSGGVNGNLGNSLMELGRSAENAFYAFIELVSDVLGFTAKSDTTKQEVGGYFNSLGAKLGEASNDLEQVAVKAETGVDKSDSSKNPIREAVNEAKEVLGTLKGYVESLGTIGDSNPVGYANNAAGSGTTAADDELRKAFKALQEIVKAATDAGVKALKIGATTLQANGGADNKEGAKILATSGGNPAAADVAKAAAILSSVSGEEMLSSIVKSGENDAQLAAAADGNTSAISFAKGGSDAHLAGANTPKAAAVAGGIALRSLVKTGKLAAGAADNATGGGKEVQGVGVAAANKLLRAVEDVIKKTVKNVLEKAKEKIDKARGSQEPVSESSK.

The signal sequence occupies residues 1 to 26; the sequence is MRKRISAIINKLNISIIIMTVVLMIG. Cys-27 carries the N-palmitoyl cysteine lipid modification. Cys-27 is lipidated: S-diacylglycerol cysteine.

It belongs to the variable large protein (Vlp) family. Alpha subfamily.

The protein resides in the cell outer membrane. Its function is as follows. The Vlp and Vsp proteins are antigenically distinct proteins, only one vlp or vsp gene is transcriptionally active at any one time. Switching between these genes is a mechanism of host immune response evasion. The protein is Variable large protein 7 of Borrelia hermsii.